An 880-amino-acid chain; its full sequence is Potassium transport protein 2 (880 aa).

Asn9 carries an N-linked (GlcNAc...) asparagine glycan. The next 2 helical transmembrane spans lie at 28–48 and 84–104; these read FVQD…LYGS and TILL…LTLF. The disordered stretch occupies residues 157 to 182; the sequence is MHRPVAPETKAEEAEHQENEKHHRHH. Basic and acidic residues predominate over residues 165–177; sequence TKAEEAEHQENEK. N-linked (GlcNAc...) asparagine glycosylation is found at Asn239, Asn283, Asn293, Asn294, Asn321, Asn443, and Asn460. The segment covering 289 to 315 has biased composition (polar residues); it reads HHLDNNSSISSHNPSLETANDGNQETV. Residues 289–344 are disordered; it reads HHLDNNSSISSHNPSLETANDGNQETVSSSNSNYSTTRVDNDPHVASYSPQNSNFD. A compositionally biased stretch (low complexity) spans 316 to 325; it reads SSSNSNYSTT. 6 consecutive transmembrane segments (helical) span residues 494–514, 571–591, 625–645, 684–704, 756–776, and 787–807; these read ILVV…LIFI, LIFL…WIMI, WVLF…FMVL, IAPA…YPIA, QLSH…IVEG, and FTLF…GLSL. Positions 857 to 880 are disordered; the sequence is REEEDYMRRHGKKNTNRADPVPSS.

Belongs to the TrkH potassium transport family.

Its subcellular location is the cell membrane. Together with TRK1, defines the major, high-affinity potassium influx transport system. Involved in maintenance of the proper sodium/potassium ratio in the cell and in regulating the plasma membrane potential. This chain is Potassium transport protein 2 (trk2), found in Schizosaccharomyces pombe (strain 972 / ATCC 24843) (Fission yeast).